The following is a 492-amino-acid chain: GTPase Obg (492 aa).

Residues 2 to 159 (PRFVDRVVIH…RELTLELKTV (158 aa)) enclose the Obg domain. Residues 160–340 (ADVGLIGFPS…LIFGLWQMIS (181 aa)) form the OBG-type G domain. GTP contacts are provided by residues 166–173 (GFPSAGKS), 191–195 (FTTLV), 212–215 (DVPG), 292–295 (NKID), and 321–323 (STV). Positions 173 and 193 each coordinate Mg(2+). The region spanning 358-438 (PVPVDDSGFR…IGDMTFDWEP (81 aa)) is the OCT domain. The tract at residues 441–492 (PAGQQVVLSGRGTDARLERTERVGAAERKAARRQRRTGDDAERGTTERGENT) is disordered. 2 stretches are compositionally biased toward basic and acidic residues: residues 453 to 469 (TDARLERTERVGAAERK) and 476 to 492 (RTGDDAERGTTERGENT).

It belongs to the TRAFAC class OBG-HflX-like GTPase superfamily. OBG GTPase family. As to quaternary structure, monomer. Mg(2+) serves as cofactor.

The protein localises to the cytoplasm. Functionally, an essential GTPase which binds GTP, GDP and possibly (p)ppGpp with moderate affinity, with high nucleotide exchange rates and a fairly low GTP hydrolysis rate. Plays a role in control of the cell cycle, stress response, ribosome biogenesis and in those bacteria that undergo differentiation, in morphogenesis control. This chain is GTPase Obg, found in Mycolicibacterium paratuberculosis (strain ATCC BAA-968 / K-10) (Mycobacterium paratuberculosis).